We begin with the raw amino-acid sequence, 358 residues long: Probable G-protein coupled receptor 25 (358 aa).

The Extracellular portion of the chain corresponds to Met1–Pro43. A helical transmembrane segment spans residues Ala44–Leu64. The Cytoplasmic segment spans residues Ser65–Thr76. Residues Phe77 to Ala97 traverse the membrane as a helical segment. The Extracellular segment spans residues Ala98–Lys113. Cysteines 112 and 191 form a disulfide. Residues Val114–Ser134 traverse the membrane as a helical segment. Residues Val135–Cys155 lie on the Cytoplasmic side of the membrane. Residues Val156–Leu176 traverse the membrane as a helical segment. The Extracellular portion of the chain corresponds to Tyr177–Gln200. A helical transmembrane segment spans residues Gly201–Cys221. Residues Tyr222–Ser239 lie on the Cytoplasmic side of the membrane. The chain crosses the membrane as a helical span at residues Leu240 to Leu260. At Arg261–Trp284 the chain is on the extracellular side. A helical membrane pass occupies residues Gly285–Leu307. The Cytoplasmic portion of the chain corresponds to Asp308–Trp358. The disordered stretch occupies residues Asp339–Trp358.

It belongs to the G-protein coupled receptor 1 family.

The protein localises to the membrane. Its function is as follows. Orphan receptor. The protein is Probable G-protein coupled receptor 25 (Gpr25) of Mus musculus (Mouse).